The primary structure comprises 611 residues: E-selectin (611 aa).

The N-terminal stretch at 1–22 is a signal peptide; sequence MITSQLLPALTLVLLLFKEGGA. Residues 23–140 form the C-type lectin domain; it reads WSYNASTEAM…CDKKKLALCY (118 aa). Residues 23-557 lie on the Extracellular side of the membrane; that stretch reads WSYNASTEAM…CEAPTESSIP (535 aa). A glycan (N-linked (GlcNAc...) asparagine) is linked at N26. Cystine bridges form between C41-C139, C112-C131, C144-C155, C149-C164, C166-C175, C181-C225, C194-C207, C211-C238, C243-C287, C256-C269, C273-C300, C305-C350, C336-C363, C368-C413, C399-C426, C431-C476, C462-C489, C494-C535, and C521-C548. Residues E102, N104, and E110 each contribute to the Ca(2+) site. Residues 102–110, 114–119, and 127–129 contribute to the a carbohydrate site; these read EPNNKQNDE, EIYIKR, and NDE. Ca(2+) is bound by residues N127 and D128. In terms of domain architecture, EGF-like spans 141–176; the sequence is TAACTPTSCSGHGECVETVNNYTCKCHPGFRGLRCE. Residue N161 is glycosylated (N-linked (GlcNAc...) asparagine). Sushi domains are found at residues 179-240 and 241-302; these read VTCQ…ACNV and VECS…TCKA. Residue N204 is glycosylated (N-linked (GlcNAc...) asparagine). N266 carries N-linked (GlcNAc...) asparagine glycosylation. N313 and N333 each carry an N-linked (GlcNAc...) asparagine glycan. Sushi domains are found at residues 316-365, 367-428, 430-491, and 492-550; these read VSCS…VCKA, QCKA…TCEA, KCDA…SCQV, and VQCF…TCEA. A glycan (N-linked (GlcNAc...) asparagine) is linked at N528. A helical transmembrane segment spans residues 558-579; it reads LAVGLTAGGTSLLTVASFLLWL. The Cytoplasmic segment spans residues 580–611; it reads LKRLRKRAKKFVPASSCQSLQSDGSYHMPCSI.

It belongs to the selectin/LECAM family. Interacts with SELPLG/PSGL1 and PODXL2 through the sialyl Lewis X epitope. SELPLG sulfation appears not to be required for this interaction.

Its subcellular location is the cell membrane. Its function is as follows. Cell-surface glycoprotein having a role in immunoadhesion. Mediates in the adhesion of blood neutrophils in cytokine-activated endothelium through interaction with SELPLG/PSGL1. May have a role in capillary morphogenesis. In Canis lupus familiaris (Dog), this protein is E-selectin (SELE).